The sequence spans 1252 residues: Protein ITPRID2 (1252 aa).

Positions Cys28–Asn70 are disordered. The segment covering Glu36–Leu57 has biased composition (acidic residues). Position 85 is a phosphothreonine (Thr85). Ser90, Ser109, Ser207, Ser268, and Ser328 each carry phosphoserine. Disordered regions lie at residues Asp306–Ala483, His552–Gln575, and Phe595–Pro636. The span at Thr357–Ser372 shows a compositional bias: low complexity. 2 stretches are compositionally biased toward basic and acidic residues: residues Ser395–Arg407 and Asp415–Leu428. A compositionally biased stretch (low complexity) spans Glu429–Ser441. Ser465 is modified (phosphoserine). A phosphoserine mark is found at Ser643, Ser667, Ser736, Ser738, Ser745, Ser758, and Ser766. Lys807 is covalently cross-linked (Glycyl lysine isopeptide (Lys-Gly) (interchain with G-Cter in SUMO2)). Phosphoserine occurs at positions 866 and 898. Positions Gln955–Ala1031 form a coiled coil. Phosphoserine is present on residues Ser1036, Ser1051, Ser1056, Ser1059, and Ser1114. Disordered stretches follow at residues Gly1095–Pro1131 and Ala1147–Val1180. The segment covering Ser1103–Ser1117 has biased composition (low complexity). Thr1149 carries the post-translational modification Phosphothreonine. Residues Thr1151 to Thr1161 show a composition bias toward polar residues. Residue Ser1154 is modified to Phosphoserine. Thr1161 is modified (phosphothreonine).

The protein resides in the cytoplasm. In Mus musculus (Mouse), this protein is Protein ITPRID2 (Itprid2).